Here is a 162-residue protein sequence, read N- to C-terminus: Dihydrofolate reductase (162 aa).

One can recognise a DHFR domain in the interval 3-161 (KITLIAACAE…TRYAFVHYLR (159 aa)). 7 to 9 (IAA) contributes to the substrate binding site. NADP(+) contacts are provided by residues 8–9 (AA) and 16–21 (IGAGNA). Aspartate 29 lines the substrate pocket. 45 to 48 (GRKT) serves as a coordination point for NADP(+). Residue arginine 60 coordinates substrate. Residues 65–68 (ISRQ) and 98–103 (MGGAQI) contribute to the NADP(+) site. Threonine 117 contributes to the substrate binding site.

This sequence belongs to the dihydrofolate reductase family.

It carries out the reaction (6S)-5,6,7,8-tetrahydrofolate + NADP(+) = 7,8-dihydrofolate + NADPH + H(+). Its pathway is cofactor biosynthesis; tetrahydrofolate biosynthesis; 5,6,7,8-tetrahydrofolate from 7,8-dihydrofolate: step 1/1. In terms of biological role, key enzyme in folate metabolism. Catalyzes an essential reaction for de novo glycine and purine synthesis, and for DNA precursor synthesis. This is Dihydrofolate reductase (folA) from Neisseria meningitidis serogroup B (strain ATCC BAA-335 / MC58).